Reading from the N-terminus, the 420-residue chain is Glutamyl-tRNA reductase (420 aa).

Residues 49–52 (TCNR), Ser-109, 114–116 (EPQ), and Gln-120 each bind substrate. Residue Cys-50 is the Nucleophile of the active site. 189–194 (GAGETI) provides a ligand contact to NADP(+).

It belongs to the glutamyl-tRNA reductase family. Homodimer.

The enzyme catalyses (S)-4-amino-5-oxopentanoate + tRNA(Glu) + NADP(+) = L-glutamyl-tRNA(Glu) + NADPH + H(+). It functions in the pathway porphyrin-containing compound metabolism; protoporphyrin-IX biosynthesis; 5-aminolevulinate from L-glutamyl-tRNA(Glu): step 1/2. Its function is as follows. Catalyzes the NADPH-dependent reduction of glutamyl-tRNA(Glu) to glutamate 1-semialdehyde (GSA). The polypeptide is Glutamyl-tRNA reductase (Yersinia pseudotuberculosis serotype O:1b (strain IP 31758)).